The following is a 428-amino-acid chain: tRNA(Ile2) 2-agmatinylcytidine synthetase TiaS (428 aa).

The protein belongs to the TiaS family.

The protein localises to the cytoplasm. The catalysed reaction is cytidine(34) in tRNA(Ile2) + agmatine + ATP + H2O = 2-agmatinylcytidine(34) in tRNA(Ile2) + AMP + 2 phosphate + 2 H(+). Functionally, ATP-dependent agmatine transferase that catalyzes the formation of 2-agmatinylcytidine (agm2C) at the wobble position (C34) of tRNA(Ile2), converting the codon specificity from AUG to AUA. The sequence is that of tRNA(Ile2) 2-agmatinylcytidine synthetase TiaS from Methanosarcina mazei (strain ATCC BAA-159 / DSM 3647 / Goe1 / Go1 / JCM 11833 / OCM 88) (Methanosarcina frisia).